The sequence spans 559 residues: NXPE family member 2 (559 aa).

A helical membrane pass occupies residues 17–37; the sequence is AIARKLLLMLTFILIFWIIYL.

This sequence belongs to the NXPE family.

It localises to the membrane. The polypeptide is NXPE family member 2 (NXPE2) (Homo sapiens (Human)).